A 173-amino-acid chain; its full sequence is Adenine phosphoribosyltransferase (173 aa).

It belongs to the purine/pyrimidine phosphoribosyltransferase family. In terms of assembly, homodimer.

Its subcellular location is the cytoplasm. It carries out the reaction AMP + diphosphate = 5-phospho-alpha-D-ribose 1-diphosphate + adenine. The protein operates within purine metabolism; AMP biosynthesis via salvage pathway; AMP from adenine: step 1/1. Catalyzes a salvage reaction resulting in the formation of AMP, that is energically less costly than de novo synthesis. This is Adenine phosphoribosyltransferase from Solibacter usitatus (strain Ellin6076).